The primary structure comprises 54 residues: ATP synthase F(0) complex subunit 8 (54 aa).

Residues 9–25 (WVFLFFLVWLVLGFLGL) traverse the membrane as a helical segment.

This sequence belongs to the ATPase protein 8 family. As to quaternary structure, component of the ATP synthase complex composed at least of ATP5F1A/subunit alpha, ATP5F1B/subunit beta, ATP5MC1/subunit c (homooctomer), MT-ATP6/subunit a, MT-ATP8/subunit 8, ATP5ME/subunit e, ATP5MF/subunit f, ATP5MG/subunit g, ATP5MK/subunit k, ATP5MJ/subunit j, ATP5F1C/subunit gamma, ATP5F1D/subunit delta, ATP5F1E/subunit epsilon, ATP5PF/subunit F6, ATP5PB/subunit b, ATP5PD/subunit d, ATP5PO/subunit OSCP. ATP synthase complex consists of a soluble F(1) head domain (subunits alpha(3) and beta(3)) - the catalytic core - and a membrane F(0) domain - the membrane proton channel (subunits c, a, 8, e, f, g, k and j). These two domains are linked by a central stalk (subunits gamma, delta, and epsilon) rotating inside the F1 region and a stationary peripheral stalk (subunits F6, b, d, and OSCP).

It is found in the mitochondrion membrane. In terms of biological role, subunit 8, of the mitochondrial membrane ATP synthase complex (F(1)F(0) ATP synthase or Complex V) that produces ATP from ADP in the presence of a proton gradient across the membrane which is generated by electron transport complexes of the respiratory chain. ATP synthase complex consist of a soluble F(1) head domain - the catalytic core - and a membrane F(1) domain - the membrane proton channel. These two domains are linked by a central stalk rotating inside the F(1) region and a stationary peripheral stalk. During catalysis, ATP synthesis in the catalytic domain of F(1) is coupled via a rotary mechanism of the central stalk subunits to proton translocation. In vivo, can only synthesize ATP although its ATP hydrolase activity can be activated artificially in vitro. Part of the complex F(0) domain. In Branchiostoma lanceolatum (Common lancelet), this protein is ATP synthase F(0) complex subunit 8.